The sequence spans 235 residues: RAD9, HUS1, RAD1-interacting nuclear orphan protein 1 (235 aa).

S50 carries the phosphoserine modification. The RAD1-binding motif signature appears at 54–60 (SWVSPQF). 3 disordered regions span residues 75 to 106 (HRDQ…SETL), 111 to 130 (RVQP…VPLF), and 149 to 198 (VFAP…LVKD). Positions 96 to 106 (ESPQSSSSETL) are enriched in polar residues. The D-box motif lies at 123–130 (RRPLVPLF). Positions 161–173 (SVRDDPISPDQKE) are enriched in basic and acidic residues. Positions 171–175 (QKENS) match the KEN box motif.

In terms of assembly, interacts (when phosphorylated by PLK1) with POLQ; promoting POLQ recruitment to DNA damage sites. Interacts with RAD1; interaction is direct and promotes association with the 9-1-1 (RAD9-RAD1-HUS1) complex. Interacts with RAD18. Interacts with TOPBP1. Interacts with UBE2N. Post-translationally, phosphorylated at Ser-50 by PLK1, promoting interaction with polymerase theta (POLQ). Ubiquitinated and degraded by the APC/C complex upon mitotic exit.

It localises to the nucleus. The protein localises to the chromosome. Its function is as follows. Involved in microhomology-mediated end-joining (MMEJ) DNA repair by promoting recruitment of polymerase theta (POLQ) to DNA damage sites during mitosis. MMEJ is an alternative non-homologous end-joining (NHEJ) machinery that takes place during mitosis to repair double-strand breaks in DNA that originate in S-phase. Accumulates in M-phase; following phosphorylation by PLK1, interacts with POLQ, enabling its recruitment to double-strand breaks for subsequent repair. Also involved in the DNA damage response (DDR) signaling in response to genotoxic stresses such as ionizing radiation (IR) during the S phase. Recruited to sites of DNA damage through interaction with the 9-1-1 cell-cycle checkpoint response complex and TOPBP1 in a ATR-dependent manner. Required for the progression of the G1 to S phase transition. Plays a role in the stimulation of CHEK1 phosphorylation. This Mus musculus (Mouse) protein is RAD9, HUS1, RAD1-interacting nuclear orphan protein 1 (Rhno1).